The primary structure comprises 638 residues: 9-cis-epoxycarotenoid dioxygenase NCED1, chloroplastic (638 aa).

Residues 1–80 (MQRICPAHCS…QTEQEDEQLV (80 aa)) constitute a chloroplast transit peptide. Composition is skewed to low complexity over residues 28 to 37 (AASAAPQSPS), 44 to 69 (ASAAPPSAAASTTVLTSPLVTTTRTP), and 92 to 102 (TTNGRAAPSQS). Disordered stretches follow at residues 28–80 (AASA…EQLV) and 92–113 (TTNGRAAPSQSRPRRRPAPAAA). Fe cation-binding residues include H331, H380, H446, and H624.

It belongs to the carotenoid oxygenase family. Fe(2+) serves as cofactor.

It localises to the plastid. Its subcellular location is the chloroplast. It carries out the reaction a 9-cis-epoxycarotenoid + O2 = a 12'-apo-carotenal + 2-cis,4-trans-xanthoxin. The enzyme catalyses 9-cis-violaxanthin + O2 = (3S,5R,6S)-5,6-epoxy-3-hydroxy-5,6-dihydro-12'-apo-beta-caroten-12'-al + 2-cis,4-trans-xanthoxin. The catalysed reaction is 9'-cis-neoxanthin + O2 = (3S,5R,6R)-3,5-dihydroxy-6,7-didehydro-5,6-dihydro-12'-apo-beta-caroten-12'-al + 2-cis,4-trans-xanthoxin. Its function is as follows. Has a 11,12(11',12') 9-cis epoxycarotenoid cleavage activity. Catalyzes the first step of abscisic-acid biosynthesis from carotenoids. The protein is 9-cis-epoxycarotenoid dioxygenase NCED1, chloroplastic of Oryza sativa subsp. japonica (Rice).